The chain runs to 252 residues: Phosphoglycolate phosphatase (252 aa).

Asp-13 acts as the Nucleophile in catalysis. 3 residues coordinate Mg(2+): Asp-13, Asp-15, and Asp-192.

The protein belongs to the HAD-like hydrolase superfamily. CbbY/CbbZ/Gph/YieH family. In terms of assembly, monomer. It depends on Mg(2+) as a cofactor. Requires chloride as cofactor.

It carries out the reaction 2-phosphoglycolate + H2O = glycolate + phosphate. It functions in the pathway organic acid metabolism; glycolate biosynthesis; glycolate from 2-phosphoglycolate: step 1/1. In terms of biological role, specifically catalyzes the dephosphorylation of 2-phosphoglycolate. Is involved in the dissimilation of the intracellular 2-phosphoglycolate formed during the DNA repair of 3'-phosphoglycolate ends, a major class of DNA lesions induced by oxidative stress. The chain is Phosphoglycolate phosphatase from Shigella boydii serotype 4 (strain Sb227).